The sequence spans 618 residues: Chaperone protein DnaK (618 aa).

A Phosphothreonine; by autocatalysis modification is found at T175. A disordered region spans residues G579–K618. The segment covering A591–D604 has biased composition (low complexity).

It belongs to the heat shock protein 70 family.

Its function is as follows. Acts as a chaperone. The chain is Chaperone protein DnaK from Clostridium tetani (strain Massachusetts / E88).